The primary structure comprises 276 residues: Formamidopyrimidine-DNA glycosylase (276 aa).

Pro-2 functions as the Schiff-base intermediate with DNA in the catalytic mechanism. Glu-3 (proton donor) is an active-site residue. Lys-58 functions as the Proton donor; for beta-elimination activity in the catalytic mechanism. Positions 92, 111, and 154 each coordinate DNA. The segment at 239–273 (QVYGHAGEECSSCGTILEKIKVNGRGTTFCPHCQV) adopts an FPG-type zinc-finger fold. Arg-263 (proton donor; for delta-elimination activity) is an active-site residue.

This sequence belongs to the FPG family. In terms of assembly, monomer. It depends on Zn(2+) as a cofactor.

The catalysed reaction is Hydrolysis of DNA containing ring-opened 7-methylguanine residues, releasing 2,6-diamino-4-hydroxy-5-(N-methyl)formamidopyrimidine.. It carries out the reaction 2'-deoxyribonucleotide-(2'-deoxyribose 5'-phosphate)-2'-deoxyribonucleotide-DNA = a 3'-end 2'-deoxyribonucleotide-(2,3-dehydro-2,3-deoxyribose 5'-phosphate)-DNA + a 5'-end 5'-phospho-2'-deoxyribonucleoside-DNA + H(+). Its function is as follows. Involved in base excision repair of DNA damaged by oxidation or by mutagenic agents. Acts as a DNA glycosylase that recognizes and removes damaged bases. Has a preference for oxidized purines, such as 7,8-dihydro-8-oxoguanine (8-oxoG). Has AP (apurinic/apyrimidinic) lyase activity and introduces nicks in the DNA strand. Cleaves the DNA backbone by beta-delta elimination to generate a single-strand break at the site of the removed base with both 3'- and 5'-phosphates. The protein is Formamidopyrimidine-DNA glycosylase of Lactobacillus gasseri (strain ATCC 33323 / DSM 20243 / BCRC 14619 / CIP 102991 / JCM 1131 / KCTC 3163 / NCIMB 11718 / NCTC 13722 / AM63).